A 229-amino-acid polypeptide reads, in one-letter code: Thiamine import ATP-binding protein ThiQ (229 aa).

One can recognise an ABC transporter domain in the interval 2–229 (LHLENIRVRQ…NNAEPLRPWM (228 aa)). 32-39 (GASGSGKS) contacts ATP.

The protein belongs to the ABC transporter superfamily. Thiamine importer (TC 3.A.1.19.1) family. As to quaternary structure, the complex is composed of two ATP-binding proteins (ThiQ), two transmembrane proteins (ThiP) and a solute-binding protein (ThiB).

The protein resides in the cell inner membrane. The enzyme catalyses thiamine(out) + ATP + H2O = thiamine(in) + ADP + phosphate + H(+). Part of the ABC transporter complex ThiBPQ involved in thiamine import. Responsible for energy coupling to the transport system. This chain is Thiamine import ATP-binding protein ThiQ, found in Jannaschia sp. (strain CCS1).